Reading from the N-terminus, the 191-residue chain is Elongation factor P (191 aa).

An N6-(3,6-diaminohexanoyl)-5-hydroxylysine modification is found at K34.

This sequence belongs to the elongation factor P family. May be beta-lysylated on the epsilon-amino group of Lys-34 by the combined action of EpmA and EpmB, and then hydroxylated on the C5 position of the same residue by EpmC (if this protein is present). Lysylation is critical for the stimulatory effect of EF-P on peptide-bond formation. The lysylation moiety may extend toward the peptidyltransferase center and stabilize the terminal 3-CCA end of the tRNA. Hydroxylation of the C5 position on Lys-34 may allow additional potential stabilizing hydrogen-bond interactions with the P-tRNA.

It is found in the cytoplasm. Its pathway is protein biosynthesis; polypeptide chain elongation. Functionally, involved in peptide bond synthesis. Alleviates ribosome stalling that occurs when 3 or more consecutive Pro residues or the sequence PPG is present in a protein, possibly by augmenting the peptidyl transferase activity of the ribosome. Modification of Lys-34 is required for alleviation. The polypeptide is Elongation factor P (Colwellia psychrerythraea (strain 34H / ATCC BAA-681) (Vibrio psychroerythus)).